The chain runs to 191 residues: Glutathione-dependent formaldehyde-activating enzyme (191 aa).

Positions 22–169 constitute a CENP-V/GFA domain; it reads FAGGTLQCLC…LTELGLTPYD (148 aa). Residues cysteine 29, cysteine 31, cysteine 50, cysteine 52, cysteine 55, cysteine 97, and cysteine 100 each contribute to the Zn(2+) site.

This sequence belongs to the Gfa family. Zn(2+) serves as cofactor.

The catalysed reaction is S-(hydroxymethyl)glutathione = glutathione + formaldehyde. Its pathway is one-carbon metabolism; formaldehyde degradation; formate from formaldehyde (glutathione route): step 1/3. Its function is as follows. Catalyzes the condensation of formaldehyde and glutathione to S-hydroxymethylglutathione. The protein is Glutathione-dependent formaldehyde-activating enzyme of Xanthomonas campestris pv. campestris (strain 8004).